We begin with the raw amino-acid sequence, 158 residues long: NAD(P)H-quinone oxidoreductase subunit O, chloroplastic (158 aa).

The N-terminal 38 residues, Met-1–Lys-38, are a transit peptide targeting the chloroplast. The interval Pro-33 to Lys-70 is disordered. A compositionally biased stretch (low complexity) spans Ala-56–Lys-70.

This sequence belongs to the NDH complex subunit O family. As to quaternary structure, part of the chloroplast NDH complex, composed of a mixture of chloroplast and nucleus encoded subunits. Component of the NDH subcomplex A, at least composed of ndhH, ndhI, ndhJ, ndhK, ndhL, ndhM, ndhN and ndhO.

It is found in the plastid. Its subcellular location is the chloroplast thylakoid membrane. The enzyme catalyses a plastoquinone + NADH + (n+1) H(+)(in) = a plastoquinol + NAD(+) + n H(+)(out). The catalysed reaction is a plastoquinone + NADPH + (n+1) H(+)(in) = a plastoquinol + NADP(+) + n H(+)(out). In terms of biological role, NDH shuttles electrons from NAD(P)H:plastoquinone, via FMN and iron-sulfur (Fe-S) centers, to quinones in the photosynthetic chain and possibly in a chloroplast respiratory chain. The immediate electron acceptor for the enzyme in this species is believed to be plastoquinone. Couples the redox reaction to proton translocation, and thus conserves the redox energy in a proton gradient. The protein is NAD(P)H-quinone oxidoreductase subunit O, chloroplastic of Arabidopsis thaliana (Mouse-ear cress).